Consider the following 487-residue polypeptide: 3-octaprenyl-4-hydroxybenzoate carboxy-lyase (487 aa).

Position 172 (asparagine 172) interacts with Mn(2+). Residues 175 to 177, 189 to 191, and 194 to 195 contribute to the prenylated FMN site; these read IYR, RWL, and RG. Residue glutamate 238 participates in Mn(2+) binding. The Proton donor role is filled by aspartate 287.

It belongs to the UbiD family. Homohexamer. It depends on prenylated FMN as a cofactor. The cofactor is Mn(2+).

The protein resides in the cell membrane. The catalysed reaction is a 4-hydroxy-3-(all-trans-polyprenyl)benzoate + H(+) = a 2-(all-trans-polyprenyl)phenol + CO2. Its pathway is cofactor biosynthesis; ubiquinone biosynthesis. Catalyzes the decarboxylation of 3-octaprenyl-4-hydroxy benzoate to 2-octaprenylphenol, an intermediate step in ubiquinone biosynthesis. The protein is 3-octaprenyl-4-hydroxybenzoate carboxy-lyase of Blochmanniella pennsylvanica (strain BPEN).